The primary structure comprises 342 residues: Phosphate acyltransferase (342 aa).

The protein belongs to the PlsX family. In terms of assembly, homodimer. Probably interacts with PlsY.

Its subcellular location is the cytoplasm. It carries out the reaction a fatty acyl-[ACP] + phosphate = an acyl phosphate + holo-[ACP]. It functions in the pathway lipid metabolism; phospholipid metabolism. Its function is as follows. Catalyzes the reversible formation of acyl-phosphate (acyl-PO(4)) from acyl-[acyl-carrier-protein] (acyl-ACP). This enzyme utilizes acyl-ACP as fatty acyl donor, but not acyl-CoA. The chain is Phosphate acyltransferase from Shewanella woodyi (strain ATCC 51908 / MS32).